The following is a 152-amino-acid chain: Probable flagellum biosynthesis repressor protein FlbT (152 aa).

Belongs to the FlbT family.

Functionally, has a post-transcriptional repressor function in flagellum biogenesis. Associates with the 5'-UTR of fljK mRNA and promotes its degradation. This chain is Probable flagellum biosynthesis repressor protein FlbT, found in Brucella canis (strain ATCC 23365 / NCTC 10854 / RM-666).